The sequence spans 218 residues: Serine/threonine-protein phosphatase 2 (218 aa).

Mn(2+)-binding residues include D22, H24, D51, and N77. The active-site Proton donor is the H78. Mn(2+) is bound at residue H187.

The protein belongs to the PPP phosphatase family. PP-1 subfamily. The cofactor is Mn(2+).

It catalyses the reaction O-phospho-L-seryl-[protein] + H2O = L-seryl-[protein] + phosphate. It carries out the reaction O-phospho-L-threonyl-[protein] + H2O = L-threonyl-[protein] + phosphate. With respect to regulation, inhibited by cadmium, copper, zinc when added activity but with less efficiency. Its function is as follows. Can hydrolyze phosphorylated Ser-, Thr- or Tyr-substrates in vitro. The natural substrate is unknown. This chain is Serine/threonine-protein phosphatase 2 (pphB), found in Salmonella typhimurium (strain LT2 / SGSC1412 / ATCC 700720).